The sequence spans 91 residues: Small ribosomal subunit protein uS19 (91 aa).

It belongs to the universal ribosomal protein uS19 family.

Functionally, protein S19 forms a complex with S13 that binds strongly to the 16S ribosomal RNA. The protein is Small ribosomal subunit protein uS19 of Halorhodospira halophila (strain DSM 244 / SL1) (Ectothiorhodospira halophila (strain DSM 244 / SL1)).